The sequence spans 437 residues: tRNA modification GTPase MnmE (437 aa).

Residues Arg-21, Glu-79, and Arg-119 each contribute to the (6S)-5-formyl-5,6,7,8-tetrahydrofolate site. A TrmE-type G domain is found at 223 to 364 (GFRVVLAGPP…FRSALIAHAR (142 aa)). Residues 233–238 (NAGKST), 252–258 (AAEPGTT), and 277–280 (DTAG) each bind GTP. Mg(2+) contacts are provided by Ser-237 and Thr-258. Lys-437 is a (6S)-5-formyl-5,6,7,8-tetrahydrofolate binding site.

This sequence belongs to the TRAFAC class TrmE-Era-EngA-EngB-Septin-like GTPase superfamily. TrmE GTPase family. Homodimer. Heterotetramer of two MnmE and two MnmG subunits. Requires K(+) as cofactor.

It localises to the cytoplasm. Functionally, exhibits a very high intrinsic GTPase hydrolysis rate. Involved in the addition of a carboxymethylaminomethyl (cmnm) group at the wobble position (U34) of certain tRNAs, forming tRNA-cmnm(5)s(2)U34. This chain is tRNA modification GTPase MnmE, found in Novosphingobium aromaticivorans (strain ATCC 700278 / DSM 12444 / CCUG 56034 / CIP 105152 / NBRC 16084 / F199).